Reading from the N-terminus, the 35-residue chain is Photosystem II reaction center protein Psb30 (35 aa).

The chain crosses the membrane as a helical span at residues valine 7–leucine 27.

It belongs to the Psb30/Ycf12 family. As to quaternary structure, PSII is composed of 1 copy each of membrane proteins PsbA, PsbB, PsbC, PsbD, PsbE, PsbF, PsbH, PsbI, PsbJ, PsbK, PsbL, PsbM, PsbT, PsbX, PsbY, PsbZ, Psb30/Ycf12, peripheral proteins PsbO, CyanoQ (PsbQ), PsbU, PsbV and a large number of cofactors. It forms dimeric complexes.

It is found in the cellular thylakoid membrane. A core subunit of photosystem II (PSII), probably helps stabilize the reaction center. The chain is Photosystem II reaction center protein Psb30 from Synechococcus sp. (strain JA-3-3Ab) (Cyanobacteria bacterium Yellowstone A-Prime).